Here is a 209-residue protein sequence, read N- to C-terminus: Ancillary SecYEG translocon subunit (209 aa).

The Cytoplasmic portion of the chain corresponds to Met-1–Lys-23. The chain crosses the membrane as a helical span at residues Trp-24–Tyr-42. At Gln-43 to Lys-209 the chain is on the periplasmic side. One copy of the TPR repeat lies at Pro-161–Asp-194.

It belongs to the YfgM family. In terms of assembly, interacts with the SecYEG translocon. Forms a complex with PpiD.

The protein localises to the cell inner membrane. Its function is as follows. May mediate protein transfer from the SecYEG translocon to the periplasmic chaperone network via its periplasmic C-terminal region. The sequence is that of Ancillary SecYEG translocon subunit from Neisseria gonorrhoeae (strain ATCC 700825 / FA 1090).